A 499-amino-acid polypeptide reads, in one-letter code: MDVLHILQTNFVSIIIGFVVIILLWMNRGKQSNSRLPPGPAPIPLLGNLLRMDVKAPYKLYMELSKKYGSVFTVWLGSKPVVVISGYQAIKDAFVTQGEEFSGRANYPVIMTVSKGYGVLVSSGKRSKDLRRFSLMTLKTFGMGRRSIEERVQEEAKMLVKAFGEYRDSVVNPKELLCNCVGNVICSIVFGHRFENDDPMFQLIQKAVDAYFNVLSSPIGAMYNMFPRIVWCFPGNHHEMFAIVNKAKVYIQEQAEIRLKTLNISEPQDFIEAFLVKMLEEKDDPNTEFNNGNMVMTAWSLFAAGTETTSSTLRQSFLMMIKYPHIQESVQKEIDEVIGSRVPTVDDRVKMPYTDAVIHEVQRYMDLSPTSVPHKVMRDTEFYNYHIPEGTMVLPLLSSVLVDPKLFKNPDEFDPENFLDENGVFKKNDGFFAFGVGKRACPGEALARVELFLFFTSVLQRFTFTGTKPPEEINIEPACSSFGRLPRSYDCYIKLRTEK.

Heme is bound at residue Cys-441.

The protein belongs to the cytochrome P450 family. Heme is required as a cofactor. In terms of tissue distribution, in kidney and in liver from juvenile and sexually mature trout from both sexes.

Its subcellular location is the endoplasmic reticulum membrane. The protein localises to the microsome membrane. The enzyme catalyses an organic molecule + reduced [NADPH--hemoprotein reductase] + O2 = an alcohol + oxidized [NADPH--hemoprotein reductase] + H2O + H(+). Its function is as follows. Has (omega-6)-hydroxylation activity toward lauric acid. This Oncorhynchus mykiss (Rainbow trout) protein is Cytochrome P450 2M1 (cyp2m1).